The chain runs to 304 residues: Large ribosomal subunit protein uL18 (304 aa).

It belongs to the universal ribosomal protein uL18 family. In terms of assembly, component of a hexameric 5S RNP precursor complex, composed of 5S RNA, RRS1, RPF2, RPL5, RPL11 and SYO1; this complex acts as a precursor for ribosome assembly.

It localises to the cytoplasm. Component of the ribosome, a large ribonucleoprotein complex responsible for the synthesis of proteins in the cell. The small ribosomal subunit (SSU) binds messenger RNAs (mRNAs) and translates the encoded message by selecting cognate aminoacyl-transfer RNA (tRNA) molecules. The large subunit (LSU) contains the ribosomal catalytic site termed the peptidyl transferase center (PTC), which catalyzes the formation of peptide bonds, thereby polymerizing the amino acids delivered by tRNAs into a polypeptide chain. The nascent polypeptides leave the ribosome through a tunnel in the LSU and interact with protein factors that function in enzymatic processing, targeting, and the membrane insertion of nascent chains at the exit of the ribosomal tunnel. The sequence is that of Large ribosomal subunit protein uL18 from Chaetomium thermophilum (strain DSM 1495 / CBS 144.50 / IMI 039719) (Thermochaetoides thermophila).